We begin with the raw amino-acid sequence, 649 residues long: V-type ATP synthase subunit I (649 aa).

The next 7 helical transmembrane spans lie at phenylalanine 312–phenylalanine 332, phenylalanine 360–valine 380, aspartate 455–leucine 475, isoleucine 485–valine 505, glycine 520–isoleucine 540, valine 556–valine 576, and valine 593–isoleucine 613.

It belongs to the V-ATPase 116 kDa subunit family.

Its subcellular location is the cell membrane. Produces ATP from ADP in the presence of a proton gradient across the membrane. This chain is V-type ATP synthase subunit I (atpI), found in Chlamydia muridarum (strain MoPn / Nigg).